Consider the following 343-residue polypeptide: tRNA N6-adenosine threonylcarbamoyltransferase (343 aa).

His120 and His124 together coordinate Fe cation. Residues 142-146 (VVSGG), Asp175, Gly188, Asp192, and Asn281 each bind substrate. Asp309 serves as a coordination point for Fe cation.

It belongs to the KAE1 / TsaD family. Requires Fe(2+) as cofactor.

It is found in the cytoplasm. It carries out the reaction L-threonylcarbamoyladenylate + adenosine(37) in tRNA = N(6)-L-threonylcarbamoyladenosine(37) in tRNA + AMP + H(+). Required for the formation of a threonylcarbamoyl group on adenosine at position 37 (t(6)A37) in tRNAs that read codons beginning with adenine. Is involved in the transfer of the threonylcarbamoyl moiety of threonylcarbamoyl-AMP (TC-AMP) to the N6 group of A37, together with TsaE and TsaB. TsaD likely plays a direct catalytic role in this reaction. The sequence is that of tRNA N6-adenosine threonylcarbamoyltransferase from Halalkalibacterium halodurans (strain ATCC BAA-125 / DSM 18197 / FERM 7344 / JCM 9153 / C-125) (Bacillus halodurans).